Here is a 376-residue protein sequence, read N- to C-terminus: Growth/differentiation factor 8 (376 aa).

Positions M1 to S22 are cleaved as a signal peptide. A propeptide spanning residues D23–R267 is cleaved from the precursor. 4 disulfides stabilise this stretch: C273-C283, C282-C341, C310-C373, and C314-C375.

The protein belongs to the TGF-beta family. In terms of assembly, homodimer; disulfide-linked. In terms of tissue distribution, highly expressed in muscle. Also expressed in other tissues such as eye, gill, ovary, gut and brain. Very low level detected in testis. Not expressed in liver, kidney, stomach or heart.

It localises to the secreted. Its function is as follows. Acts specifically as a negative regulator of skeletal muscle growth. The sequence is that of Growth/differentiation factor 8 from Oreochromis mossambicus (Mozambique tilapia).